We begin with the raw amino-acid sequence, 546 residues long: MAELTISSDEIRSAIANYTSSYSAEASREEVGVVISAADGIAQVSGLPSVMANELLEFPGGVIGVAQNLDTDSVGVVVLGNYELLKEGDQVRRTGDVLSIPVGEKFLGRVINPLGQPIDGLGEIVAEEDRVLELQAPSVLERQPVEEPMATGIKAIDAMTPIGRGQRQLIIGDRKTGKTAVCVDTILNQKANWETGDKTKQVRCIYVAIGQKGSTIAALRKTLEEQGALEYTTIVAAPASDAAGFKWLAPFAGAALAQHWMYQGNHVLVIYDDLTKQAEAYRAISLLLRRPPGREAYPGDVFYLHSRLLERAAKLSDDLGAGSITALPIIETKANDVSAFIPTNVISITDGQVFLESDLFNRGVRPAINVGISVSRVGGAAQTKGMKKVAGSLRLDLAAYRDLEAFATFASDLDAASKAQLERGQRLVQLLIQSENAPQAVEYQIISLWLAGEGAFDNVPVDDVRRFETELHEYLGSNAPQVYEQIAGGAVLSDESKETLLQATEQFKGTFQTTDGTRIINEPEVDALDAGQVRKDQLTVSRKVGK.

An ATP-binding site is contributed by 172 to 179 (GDRKTGKT).

It belongs to the ATPase alpha/beta chains family. F-type ATPases have 2 components, CF(1) - the catalytic core - and CF(0) - the membrane proton channel. CF(1) has five subunits: alpha(3), beta(3), gamma(1), delta(1), epsilon(1). CF(0) has three main subunits: a(1), b(2) and c(9-12). The alpha and beta chains form an alternating ring which encloses part of the gamma chain. CF(1) is attached to CF(0) by a central stalk formed by the gamma and epsilon chains, while a peripheral stalk is formed by the delta and b chains.

The protein resides in the cell membrane. The enzyme catalyses ATP + H2O + 4 H(+)(in) = ADP + phosphate + 5 H(+)(out). In terms of biological role, produces ATP from ADP in the presence of a proton gradient across the membrane. The alpha chain is a regulatory subunit. The chain is ATP synthase subunit alpha from Corynebacterium efficiens (strain DSM 44549 / YS-314 / AJ 12310 / JCM 11189 / NBRC 100395).